The primary structure comprises 264 residues: Protein-L-isoaspartate O-methyltransferase (264 aa).

The disordered stretch occupies residues 1 to 49 (MRKPVGSKDGSGVYSRQGLDGYTPANSNTRISTATLPRPEPLRPAASSA). Positions 24-35 (PANSNTRISTAT) are enriched in polar residues. Serine 112 is a catalytic residue.

Belongs to the methyltransferase superfamily. L-isoaspartyl/D-aspartyl protein methyltransferase family.

The protein resides in the cytoplasm. The catalysed reaction is [protein]-L-isoaspartate + S-adenosyl-L-methionine = [protein]-L-isoaspartate alpha-methyl ester + S-adenosyl-L-homocysteine. In terms of biological role, catalyzes the methyl esterification of L-isoaspartyl residues in peptides and proteins that result from spontaneous decomposition of normal L-aspartyl and L-asparaginyl residues. It plays a role in the repair and/or degradation of damaged proteins. This is Protein-L-isoaspartate O-methyltransferase from Bordetella avium (strain 197N).